A 101-amino-acid polypeptide reads, in one-letter code: NADH-quinone oxidoreductase subunit K (101 aa).

Transmembrane regions (helical) follow at residues 4-24, 30-50, and 61-81; these read LAHF…GIFL, IVLL…FVAF, and VFVF…LAIL.

This sequence belongs to the complex I subunit 4L family. In terms of assembly, NDH-1 is composed of 14 different subunits. Subunits NuoA, H, J, K, L, M, N constitute the membrane sector of the complex.

It is found in the cell inner membrane. The enzyme catalyses a quinone + NADH + 5 H(+)(in) = a quinol + NAD(+) + 4 H(+)(out). Its function is as follows. NDH-1 shuttles electrons from NADH, via FMN and iron-sulfur (Fe-S) centers, to quinones in the respiratory chain. The immediate electron acceptor for the enzyme in this species is believed to be ubiquinone. Couples the redox reaction to proton translocation (for every two electrons transferred, four hydrogen ions are translocated across the cytoplasmic membrane), and thus conserves the redox energy in a proton gradient. The polypeptide is NADH-quinone oxidoreductase subunit K (Cupriavidus taiwanensis (strain DSM 17343 / BCRC 17206 / CCUG 44338 / CIP 107171 / LMG 19424 / R1) (Ralstonia taiwanensis (strain LMG 19424))).